Consider the following 146-residue polypeptide: Prolactin-inducible protein homolog (146 aa).

The first 28 residues, methionine 1–alanine 28, serve as a signal peptide directing secretion. Disulfide bonds link cysteine 65-cysteine 91 and cysteine 89-cysteine 123. Asparagine 105 is a glycosylation site (N-linked (GlcNAc...) asparagine).

This sequence belongs to the PIP family. Monomer. Interacts with AZGP1.

It localises to the secreted. The polypeptide is Prolactin-inducible protein homolog (PIP) (Oryctolagus cuniculus (Rabbit)).